Reading from the N-terminus, the 348-residue chain is Tetraacyldisaccharide 4'-kinase (348 aa).

Position 50 to 57 (50 to 57 (TMGGTGKT)) interacts with ATP.

It belongs to the LpxK family.

It catalyses the reaction a lipid A disaccharide + ATP = a lipid IVA + ADP + H(+). Its pathway is glycolipid biosynthesis; lipid IV(A) biosynthesis; lipid IV(A) from (3R)-3-hydroxytetradecanoyl-[acyl-carrier-protein] and UDP-N-acetyl-alpha-D-glucosamine: step 6/6. Its function is as follows. Transfers the gamma-phosphate of ATP to the 4'-position of a tetraacyldisaccharide 1-phosphate intermediate (termed DS-1-P) to form tetraacyldisaccharide 1,4'-bis-phosphate (lipid IVA). The sequence is that of Tetraacyldisaccharide 4'-kinase from Desulfotalea psychrophila (strain LSv54 / DSM 12343).